The chain runs to 608 residues: Granule-bound starch synthase 1, chloroplastic/amyloplastic (608 aa).

The N-terminal 76 residues, M1–V76, are a transit peptide targeting the chloroplast. K96 contacts ADP-alpha-D-glucose.

Belongs to the glycosyltransferase 1 family. Bacterial/plant glycogen synthase subfamily.

The protein resides in the plastid. It localises to the chloroplast. Its subcellular location is the amyloplast. It carries out the reaction an NDP-alpha-D-glucose + [(1-&gt;4)-alpha-D-glucosyl](n) = [(1-&gt;4)-alpha-D-glucosyl](n+1) + a ribonucleoside 5'-diphosphate + H(+). It functions in the pathway glycan biosynthesis; starch biosynthesis. Its function is as follows. Required for the synthesis of amylose. In Ipomoea batatas (Sweet potato), this protein is Granule-bound starch synthase 1, chloroplastic/amyloplastic (WAXY).